The sequence spans 220 residues: Tumor protein D54 (220 aa).

Met-1 is subject to N-acetylmethionine. Over residues Met-1–Asn-14 the composition is skewed to polar residues. The interval Met-1–Pro-26 is disordered. Residues Ser-3, Ser-12, and Ser-19 each carry the phosphoserine modification. The stretch at Gly-40 to Gly-82 forms a coiled coil. Phosphoserine is present on residues Ser-96, Ser-149, Ser-168, and Ser-175. Phosphothreonine is present on Thr-177. At Ser-180 the chain carries Phosphoserine. Residue Thr-187 is modified to Phosphothreonine. The disordered stretch occupies residues Lys-189 to Phe-220. Over residues Ser-200–Gln-212 the composition is skewed to polar residues. Phosphoserine occurs at positions 206 and 209.

Belongs to the TPD52 family. In terms of assembly, forms a homodimer or heterodimer with other members of the family. Interacts with MAL2.

This chain is Tumor protein D54 (Tpd52l2), found in Rattus norvegicus (Rat).